The primary structure comprises 313 residues: Olfactory receptor 1M1 (313 aa).

Residues 1–25 are Extracellular-facing; the sequence is MEPRNQTSASQFILLGLSEKPEQET. N-linked (GlcNAc...) asparagine glycosylation occurs at Asn-5. The chain crosses the membrane as a helical span at residues 26-49; that stretch reads LLFSLFFCMYLVMVVGNLLIILAI. Topologically, residues 50-57 are cytoplasmic; the sequence is SIDSHLHT. Residues 58-79 traverse the membrane as a helical segment; it reads PMYFFLANLSLVDFCLATNTIP. At 80–100 the chain is on the extracellular side; it reads KMLVSLQTGSKAISYPCCLIQ. A disulfide bond links Cys-97 and Cys-189. A helical transmembrane segment spans residues 101 to 120; sequence MYFFHFFGIVDSVIIAMMAY. The Cytoplasmic segment spans residues 121–139; sequence DRFVAICHPLHYAKIMSLR. Residues 140–158 form a helical membrane-spanning segment; it reads LCRLLVGALWAFSCFISLT. The Extracellular segment spans residues 159 to 196; the sequence is HILLMARLVFCGSHEVPHYFCDLTPILRLSCTDTSVNR. A helical membrane pass occupies residues 197–219; the sequence is IFILIVAGMVIATPFVCILASYA. Residues 220 to 236 are Cytoplasmic-facing; that stretch reads RILVAIMKVPSAGGRKK. A helical membrane pass occupies residues 237–259; it reads AFSTCSSHLSVVALFYGTTIGVY. Over 260–272 the chain is Extracellular; it reads LCPSSVLTTVKEK. Residues 273–292 traverse the membrane as a helical segment; that stretch reads ASAVMYTAVTPMLNPFIYSL. At 293–313 the chain is on the cytoplasmic side; sequence RNRDLKGALRKLVNRKITSSS.

The protein belongs to the G-protein coupled receptor 1 family.

The protein resides in the cell membrane. Functionally, odorant receptor. The sequence is that of Olfactory receptor 1M1 from Homo sapiens (Human).